We begin with the raw amino-acid sequence, 182 residues long: Large ribosomal subunit protein uL5 (182 aa).

It belongs to the universal ribosomal protein uL5 family. Part of the 50S ribosomal subunit; part of the 5S rRNA/L5/L18/L25 subcomplex. Contacts the 5S rRNA and the P site tRNA. Forms a bridge to the 30S subunit in the 70S ribosome.

Functionally, this is one of the proteins that bind and probably mediate the attachment of the 5S RNA into the large ribosomal subunit, where it forms part of the central protuberance. In the 70S ribosome it contacts protein S13 of the 30S subunit (bridge B1b), connecting the 2 subunits; this bridge is implicated in subunit movement. Contacts the P site tRNA; the 5S rRNA and some of its associated proteins might help stabilize positioning of ribosome-bound tRNAs. The chain is Large ribosomal subunit protein uL5 from Mycoplasma mobile (strain ATCC 43663 / 163K / NCTC 11711) (Mesomycoplasma mobile).